A 358-amino-acid chain; its full sequence is Peptide chain release factor 1 (358 aa).

The residue at position 236 (Q236) is an N5-methylglutamine.

This sequence belongs to the prokaryotic/mitochondrial release factor family. Methylated by PrmC. Methylation increases the termination efficiency of RF1.

The protein localises to the cytoplasm. Peptide chain release factor 1 directs the termination of translation in response to the peptide chain termination codons UAG and UAA. This Corynebacterium efficiens (strain DSM 44549 / YS-314 / AJ 12310 / JCM 11189 / NBRC 100395) protein is Peptide chain release factor 1.